Here is a 247-residue protein sequence, read N- to C-terminus: Probable transcriptional regulatory protein LBF_0056 (247 aa).

This sequence belongs to the TACO1 family.

The protein resides in the cytoplasm. The polypeptide is Probable transcriptional regulatory protein LBF_0056 (Leptospira biflexa serovar Patoc (strain Patoc 1 / Ames)).